The chain runs to 247 residues: MSRKKTRVTGVDALAEAFDAVNHADLLERLGVDIDRDLLVLALTHRSFANENGMLPNNERLEFLGDAVLGLAVANRLYELYPSSPESDISKMRASIVSRYGLADIAREINLGEFILLGKGELLTEGRSKDSILADTTEALLGAIFRQHGYEVARDVVLTLFHHKINHASAKGIHQDWKTTLQEELAQRKKPMVEYQTTSVGPDHDLLFTAVVYLGDVEMGRGEGPNKKLAEQEAARQAFLKLREKRA.

One can recognise an RNase III domain in the interval 23-149 (HADLLERLGV…LLGAIFRQHG (127 aa)). A Mg(2+)-binding site is contributed by E62. The active site involves D66. D135 and E138 together coordinate Mg(2+). E138 is an active-site residue. One can recognise a DRBM domain in the interval 176–244 (DWKTTLQEEL…ARQAFLKLRE (69 aa)).

It belongs to the ribonuclease III family. In terms of assembly, homodimer. Requires Mg(2+) as cofactor.

It is found in the cytoplasm. The catalysed reaction is Endonucleolytic cleavage to 5'-phosphomonoester.. Digests double-stranded RNA. Involved in the processing of primary rRNA transcript to yield the immediate precursors to the large and small rRNAs (23S and 16S). Processes some mRNAs, and tRNAs when they are encoded in the rRNA operon. Processes pre-crRNA and tracrRNA of type II CRISPR loci if present in the organism. The chain is Ribonuclease 3 from Corynebacterium efficiens (strain DSM 44549 / YS-314 / AJ 12310 / JCM 11189 / NBRC 100395).